A 425-amino-acid chain; its full sequence is Glutamyl-tRNA(Gln) amidotransferase subunit D (425 aa).

The interval 53 to 84 (ENNGEAANGGNGGKNGQKEPEPAKEKVSKPGL) is disordered. Basic and acidic residues predominate over residues 68–80 (GQKEPEPAKEKVS). The Asparaginase/glutaminase domain occupies 85 to 414 (PKVSILSTGG…EKAVSMLGEN (330 aa)). Residues threonine 95, threonine 171, aspartate 172, and lysine 248 contribute to the active site.

It belongs to the asparaginase 1 family. GatD subfamily. In terms of assembly, heterodimer of GatD and GatE.

The catalysed reaction is L-glutamyl-tRNA(Gln) + L-glutamine + ATP + H2O = L-glutaminyl-tRNA(Gln) + L-glutamate + ADP + phosphate + H(+). Allows the formation of correctly charged Gln-tRNA(Gln) through the transamidation of misacylated Glu-tRNA(Gln) in organisms which lack glutaminyl-tRNA synthetase. The reaction takes place in the presence of glutamine and ATP through an activated gamma-phospho-Glu-tRNA(Gln). The GatDE system is specific for glutamate and does not act on aspartate. In Methanosarcina mazei (strain ATCC BAA-159 / DSM 3647 / Goe1 / Go1 / JCM 11833 / OCM 88) (Methanosarcina frisia), this protein is Glutamyl-tRNA(Gln) amidotransferase subunit D.